Consider the following 115-residue polypeptide: NADH-ubiquinone oxidoreductase chain 3 (115 aa).

3 consecutive transmembrane segments (helical) span residues 3 to 23, 55 to 75, and 84 to 104; these read FMLT…IAFW, FFLV…LLPL, and LEVM…SLAY.

The protein belongs to the complex I subunit 3 family. Core subunit of respiratory chain NADH dehydrogenase (Complex I) which is composed of 45 different subunits. Interacts with TMEM186. Interacts with TMEM242.

It localises to the mitochondrion inner membrane. It catalyses the reaction a ubiquinone + NADH + 5 H(+)(in) = a ubiquinol + NAD(+) + 4 H(+)(out). In terms of biological role, core subunit of the mitochondrial membrane respiratory chain NADH dehydrogenase (Complex I) which catalyzes electron transfer from NADH through the respiratory chain, using ubiquinone as an electron acceptor. Essential for the catalytic activity of complex I. This chain is NADH-ubiquinone oxidoreductase chain 3, found in Rhinolophus pumilus (Horseshoe bat).